A 60-amino-acid chain; its full sequence is Large ribosomal subunit protein uL30 (60 aa).

It belongs to the universal ribosomal protein uL30 family. Part of the 50S ribosomal subunit.

The chain is Large ribosomal subunit protein uL30 from Aromatoleum aromaticum (strain DSM 19018 / LMG 30748 / EbN1) (Azoarcus sp. (strain EbN1)).